A 66-amino-acid chain; its full sequence is Large ribosomal subunit protein bL35 (66 aa).

This sequence belongs to the bacterial ribosomal protein bL35 family.

The polypeptide is Large ribosomal subunit protein bL35 (Methylobacterium nodulans (strain LMG 21967 / CNCM I-2342 / ORS 2060)).